We begin with the raw amino-acid sequence, 303 residues long: MFFMLETSICNIELRNPTILAAGVMGSMASSLNRIYRGGAGAVVTKSFSLRPNPGYRNPTTVEVTGGVINAIGLSNPGVEAFREELKLVDEEVPLIASVYGASPEEFASAAASVEEYADMIELNVSCPHAMAGCGASIGQDPELTFRVVSAVKDAVDVPISTKLTPNVTDIVEIAGSAEEAGSDALTLINSLGPGMKIDIKTARPILSNAFGGMSGPAIKPVAVRCVYDVYRSVDIPIMGVGGVRDFQDAVEFLFAGARAVQVGTAIMYDGPEVFMKICRGLEAFMMAEGFSSVDEMVGLAHD.

Substrate is bound by residues K46, 70-74 (NAIGL), and N124. Residue 46–47 (KS) coordinates FMN. N124 is an FMN binding site. C127 acts as the Nucleophile in catalysis. Residues K163 and I189 each coordinate FMN. 190-191 (NS) is a binding site for substrate. FMN-binding positions include G216, 242–243 (GG), and 264–265 (GT).

Belongs to the dihydroorotate dehydrogenase family. Type 1 subfamily. Heterotetramer of 2 PyrK and 2 PyrD type B subunits. FMN serves as cofactor.

It is found in the cytoplasm. The catalysed reaction is (S)-dihydroorotate + NAD(+) = orotate + NADH + H(+). Its pathway is pyrimidine metabolism; UMP biosynthesis via de novo pathway; orotate from (S)-dihydroorotate (NAD(+) route): step 1/1. Catalyzes the conversion of dihydroorotate to orotate with NAD(+) as electron acceptor. This Methanothermobacter thermautotrophicus (strain ATCC 29096 / DSM 1053 / JCM 10044 / NBRC 100330 / Delta H) (Methanobacterium thermoautotrophicum) protein is Dihydroorotate dehydrogenase B (NAD(+)), catalytic subunit (pyrD).